A 302-amino-acid chain; its full sequence is Phospho-N-acetylmuramoyl-pentapeptide-transferase (302 aa).

9 helical membrane passes run 1–21, 42–62, 68–88, 123–143, 154–174, 178–198, 204–224, 229–249, and 279–299; these read MIAA…KLFR, GTPT…GMIS, VLLG…LSVV, FFGF…LVIV, GLDG…WFFL, GVSE…LVFN, IFMG…VSVL, FYLV…ILQV, and IVAV…EIFG.

The protein belongs to the glycosyltransferase 4 family. MraY subfamily. The cofactor is Mg(2+).

The protein localises to the cell inner membrane. The catalysed reaction is UDP-N-acetyl-alpha-D-muramoyl-L-alanyl-gamma-D-glutamyl-meso-2,6-diaminopimeloyl-D-alanyl-D-alanine + di-trans,octa-cis-undecaprenyl phosphate = di-trans,octa-cis-undecaprenyl diphospho-N-acetyl-alpha-D-muramoyl-L-alanyl-D-glutamyl-meso-2,6-diaminopimeloyl-D-alanyl-D-alanine + UMP. The protein operates within cell wall biogenesis; peptidoglycan biosynthesis. Functionally, catalyzes the initial step of the lipid cycle reactions in the biosynthesis of the cell wall peptidoglycan: transfers peptidoglycan precursor phospho-MurNAc-pentapeptide from UDP-MurNAc-pentapeptide onto the lipid carrier undecaprenyl phosphate, yielding undecaprenyl-pyrophosphoryl-MurNAc-pentapeptide, known as lipid I. This is Phospho-N-acetylmuramoyl-pentapeptide-transferase from Thermotoga petrophila (strain ATCC BAA-488 / DSM 13995 / JCM 10881 / RKU-1).